Consider the following 318-residue polypeptide: Porphobilinogen deaminase (318 aa).

At Cys245 the chain carries S-(dipyrrolylmethanemethyl)cysteine.

This sequence belongs to the HMBS family. In terms of assembly, monomer. Dipyrromethane is required as a cofactor.

The enzyme catalyses 4 porphobilinogen + H2O = hydroxymethylbilane + 4 NH4(+). It functions in the pathway porphyrin-containing compound metabolism; protoporphyrin-IX biosynthesis; coproporphyrinogen-III from 5-aminolevulinate: step 2/4. The protein operates within porphyrin-containing compound metabolism; chlorophyll biosynthesis. In terms of biological role, tetrapolymerization of the monopyrrole PBG into the hydroxymethylbilane pre-uroporphyrinogen in several discrete steps. The chain is Porphobilinogen deaminase from Prochlorococcus marinus (strain MIT 9215).